A 462-amino-acid chain; its full sequence is tRNA modification GTPase MnmE (462 aa).

(6S)-5-formyl-5,6,7,8-tetrahydrofolate is bound by residues Arg-27, Glu-89, and Arg-128. The region spanning 224 to 383 is the TrmE-type G domain; it reads GLATAIVGRP…LEAQIAKLFF (160 aa). K(+) is bound at residue Asn-234. GTP is bound by residues 234–239, 253–259, and 278–281; these read NVGKSS, TDVAGTT, and DTAG. Ser-238 provides a ligand contact to Mg(2+). K(+) is bound by residues Thr-253, Val-255, and Thr-258. Position 259 (Thr-259) interacts with Mg(2+). Lys-462 is a (6S)-5-formyl-5,6,7,8-tetrahydrofolate binding site.

Belongs to the TRAFAC class TrmE-Era-EngA-EngB-Septin-like GTPase superfamily. TrmE GTPase family. In terms of assembly, homodimer. Heterotetramer of two MnmE and two MnmG subunits. It depends on K(+) as a cofactor.

The protein localises to the cytoplasm. Exhibits a very high intrinsic GTPase hydrolysis rate. Involved in the addition of a carboxymethylaminomethyl (cmnm) group at the wobble position (U34) of certain tRNAs, forming tRNA-cmnm(5)s(2)U34. This is tRNA modification GTPase MnmE from Latilactobacillus sakei subsp. sakei (strain 23K) (Lactobacillus sakei subsp. sakei).